A 60-amino-acid polypeptide reads, in one-letter code: Large ribosomal subunit protein uL30 (60 aa).

It belongs to the universal ribosomal protein uL30 family. Part of the 50S ribosomal subunit.

In Burkholderia mallei (strain NCTC 10247), this protein is Large ribosomal subunit protein uL30.